The chain runs to 188 residues: Anaphase-promoting complex subunit 10 (188 aa).

In terms of domain architecture, DOC spans 4–187; it reads NSNINSNSRL…SPEVSMFQTL (184 aa).

Belongs to the APC10 family. The APC/C is composed of at least 13 subunits that stay tightly associated throughout the cell cycle: anapc1, anapc2, anapc3, anapc4, anapc5, anapc6, anapc7, anapc8, anapc10, anapc11, cdc20, cdc26 and cdh1.

It localises to the nucleus. Its pathway is protein modification; protein ubiquitination. Its function is as follows. Component of the anaphase promoting complex/cyclosome (APC/C), a cell cycle-regulated E3 ubiquitin-protein ligase complex that controls progression through mitosis and the G1 phase of the cell cycle. The chain is Anaphase-promoting complex subunit 10 (anapc10) from Dictyostelium discoideum (Social amoeba).